Reading from the N-terminus, the 92-residue chain is Long neurotoxin 73 (92 aa).

The first 21 residues, 1–21 (MKTLLLTLVVVTIVCLDLGDS), serve as a signal peptide directing secretion. 5 disulfide bridges follow: cysteine 24–cysteine 41, cysteine 34–cysteine 62, cysteine 47–cysteine 51, cysteine 66–cysteine 77, and cysteine 78–cysteine 83.

Belongs to the three-finger toxin family. Long-chain subfamily. Type II alpha-neurotoxin sub-subfamily. Expressed by the venom gland.

The protein resides in the secreted. Its function is as follows. Binds with high affinity to muscular (alpha-1/CHRNA1) and neuronal (alpha-7/CHRNA7) nicotinic acetylcholine receptor (nAChR) and inhibits acetylcholine from binding to the receptor, thereby impairing neuromuscular and neuronal transmission. This Drysdalia coronoides (White-lipped snake) protein is Long neurotoxin 73.